Here is a 142-residue protein sequence, read N- to C-terminus: MRHYETMFILKPTLVEEEIKSKIEFYREVITKHHGVIETSLDMGMRNLAYEIKKHKRGYYYVAYFKAEPSMIVELERLYRINEDVLRFIVIKYESKKEVEAWHALVDRANKKPSHAKEKHEKTEHTHSHHAEEAESVGSHSE.

Basic and acidic residues predominate over residues 110–133; that stretch reads NKKPSHAKEKHEKTEHTHSHHAEE. A disordered region spans residues 110–142; it reads NKKPSHAKEKHEKTEHTHSHHAEEAESVGSHSE.

The protein belongs to the bacterial ribosomal protein bS6 family.

Binds together with bS18 to 16S ribosomal RNA. The protein is Small ribosomal subunit protein bS6 of Helicobacter pylori (strain P12).